A 235-amino-acid polypeptide reads, in one-letter code: Glucosamine-6-phosphate deaminase (235 aa).

Asp-62 (proton acceptor; for enolization step) is an active-site residue. The active-site For ring-opening step is Asn-128. His-130 functions as the Proton acceptor; for ring-opening step in the catalytic mechanism. Catalysis depends on Glu-135, which acts as the For ring-opening step.

This sequence belongs to the glucosamine/galactosamine-6-phosphate isomerase family. NagB subfamily.

It catalyses the reaction alpha-D-glucosamine 6-phosphate + H2O = beta-D-fructose 6-phosphate + NH4(+). It functions in the pathway amino-sugar metabolism; N-acetylneuraminate degradation; D-fructose 6-phosphate from N-acetylneuraminate: step 5/5. Catalyzes the reversible isomerization-deamination of glucosamine 6-phosphate (GlcN6P) to form fructose 6-phosphate (Fru6P) and ammonium ion. This Streptococcus sanguinis (strain SK36) protein is Glucosamine-6-phosphate deaminase.